Here is a 347-residue protein sequence, read N- to C-terminus: Ultraviolet-sensitive opsin (347 aa).

Over 1–37 (MSGEEEFYLFKNGSIGGPWDGPQYHIAPPWAFYLQTA) the chain is Extracellular. N12 carries an N-linked (GlcNAc...) asparagine glycan. Residues 38–58 (FMGFVFMVGTPLNAIVLVVTI) form a helical membrane-spanning segment. Residues 59–69 (KYKKLRQPLNY) are Cytoplasmic-facing. A helical transmembrane segment spans residues 70–90 (ILVNISFCGFLACIICIFTVF). Topologically, residues 91–106 (VSSSQGYFVFGKHVCA) are extracellular. The cysteines at positions 105 and 182 are disulfide-linked. The chain crosses the membrane as a helical span at residues 107-127 (FEGFMGATAGLVTGWSLAFLA). Over 128–147 (FERYIVICKPLGNFRFTAKH) the chain is Cytoplasmic. The chain crosses the membrane as a helical span at residues 148-168 (ALVVVVATWVIGIGVAIPPFF). At 169–197 (GWSRYVPEGLQCSCGPDWYTVGTKYRSEY) the chain is on the extracellular side. A helical transmembrane segment spans residues 198-218 (YTWFLFIFCFIVPLSLIIFSY). Residues 219 to 247 (SQLLSALRAVAAQQQESATTQKAEREVSR) lie on the Cytoplasmic side of the membrane. The helical transmembrane segment at 248 to 268 (MVVVMVGSFCVCYVPYAALAM) threads the bilayer. Residues 269-282 (YMVNNREHGIDLRL) are Extracellular-facing. A helical membrane pass occupies residues 283-303 (VTIPAFFSKSSCVYNPIIYCF). K291 is modified (N6-(retinylidene)lysine). Over 304 to 347 (MNKQFRGCIMEMVCGKPMTDDSDMSSSAQRTEVSSVSSSQVSPS) the chain is Cytoplasmic. C317 is lipidated: S-palmitoyl cysteine. The interval 324-347 (DSDMSSSAQRTEVSSVSSSQVSPS) is disordered. Low complexity predominate over residues 328-347 (SSSAQRTEVSSVSSSQVSPS).

The protein belongs to the G-protein coupled receptor 1 family. Opsin subfamily. Phosphorylated on some or all of the serine and threonine residues present in the C-terminal region. In terms of tissue distribution, cone photoreceptor cells.

Its subcellular location is the membrane. Visual pigments are the light-absorbing molecules that mediate vision. They consist of an apoprotein, opsin, covalently linked to cis-retinal. In Melopsittacus undulatus (Budgerigar), this protein is Ultraviolet-sensitive opsin.